A 435-amino-acid chain; its full sequence is Islet cell autoantigen 1-like protein (435 aa).

In terms of domain architecture, AH spans 44 to 247 (ASDAELDAKL…TAQMMSQIQE (204 aa)). Positions 391–435 (WASQEGSEHSDTLPVPSQHPKKLKYLGPLSNPDAIGHSDDELLNA) are disordered. Positions 426–435 (GHSDDELLNA) are enriched in basic and acidic residues.

This chain is Islet cell autoantigen 1-like protein (Ica1l), found in Rattus norvegicus (Rat).